We begin with the raw amino-acid sequence, 357 residues long: DNA replication and repair protein RecF (357 aa).

30-37 (GANGSGKT) is a binding site for ATP.

It belongs to the RecF family.

The protein localises to the cytoplasm. In terms of biological role, the RecF protein is involved in DNA metabolism; it is required for DNA replication and normal SOS inducibility. RecF binds preferentially to single-stranded, linear DNA. It also seems to bind ATP. This Escherichia coli O7:K1 (strain IAI39 / ExPEC) protein is DNA replication and repair protein RecF.